Reading from the N-terminus, the 397-residue chain is MRRNPHFSLLKPQYLFSEISKKLAQFRKENPEISVIDLSIGDTTQPLCRSITQAIKEFCVSQEKQETYRGYGPETGLEKLRTKIASEVYENRISPEEIFISDGAKPDIFRLFSFFGSEKTLGLQDPVYPAYRDIAHITGIRDIIPLACRKETGFIPELPNQQSLDILCLCYPNNPTGTVLTFQQLQALVNYANQHGTVLIFDAAYSAFVSDPSLPKSIFEIPEAKYCAIEINSFSKSLGFTGMRLAWNVIPKELTYDNNEPMINDWKRLFATTFNGASLLMQEAGYYGLDLFPTPPAISLYLTNAQKLKKSLETAGFSVHGGDHAPYLWVELPEGISDEEAFDFFLHQYHIAVTPGHGFGSCGQGFVRFSALTQPQNIALACDRLCTASLKETMVLA.

Substrate contacts are provided by Y14 and G41. Residues Y71, A104–K105, Y128, N174, Y205, and S233–S235 each bind pyridoxal 5'-phosphate. Residues K105, Y128, and N174 each coordinate substrate. N6-(pyridoxal phosphate)lysine is present on K236. Pyridoxal 5'-phosphate is bound by residues R244 and N275. Substrate is bound by residues N275 and R368.

Belongs to the class-I pyridoxal-phosphate-dependent aminotransferase family. LL-diaminopimelate aminotransferase subfamily. In terms of assembly, homodimer. Requires pyridoxal 5'-phosphate as cofactor.

It carries out the reaction (2S,6S)-2,6-diaminopimelate + 2-oxoglutarate = (S)-2,3,4,5-tetrahydrodipicolinate + L-glutamate + H2O + H(+). Its pathway is amino-acid biosynthesis; L-lysine biosynthesis via DAP pathway; LL-2,6-diaminopimelate from (S)-tetrahydrodipicolinate (aminotransferase route): step 1/1. Its function is as follows. Involved in the synthesis of meso-diaminopimelate (m-DAP or DL-DAP), required for both lysine and peptidoglycan biosynthesis. Catalyzes the direct conversion of tetrahydrodipicolinate to LL-diaminopimelate. This is LL-diaminopimelate aminotransferase from Chlamydia pneumoniae (Chlamydophila pneumoniae).